The following is a 373-amino-acid chain: Alanine racemase (373 aa).

Lys37 (proton acceptor; specific for D-alanine) is an active-site residue. Lys37 carries the post-translational modification N6-(pyridoxal phosphate)lysine. Residue Arg135 coordinates substrate. The active-site Proton acceptor; specific for L-alanine is the Tyr266. Met313 contributes to the substrate binding site.

This sequence belongs to the alanine racemase family. It depends on pyridoxal 5'-phosphate as a cofactor.

It catalyses the reaction L-alanine = D-alanine. The protein operates within amino-acid biosynthesis; D-alanine biosynthesis; D-alanine from L-alanine: step 1/1. In terms of biological role, catalyzes the interconversion of L-alanine and D-alanine. This organism is able to use both L- and D-alanine as a nitrogen source. May also prevent D-alanine from interfering with the use of L-alanine. This Methanococcus maripaludis (strain DSM 14266 / JCM 13030 / NBRC 101832 / S2 / LL) protein is Alanine racemase (alr).